Consider the following 363-residue polypeptide: Chorismate synthase (363 aa).

R48 and R54 together coordinate NADP(+). Residues 125 to 127 (RSS), 237 to 238 (NA), G277, 292 to 296 (KPTSS), and R318 each bind FMN.

Belongs to the chorismate synthase family. Homotetramer. The cofactor is FMNH2.

The catalysed reaction is 5-O-(1-carboxyvinyl)-3-phosphoshikimate = chorismate + phosphate. Its pathway is metabolic intermediate biosynthesis; chorismate biosynthesis; chorismate from D-erythrose 4-phosphate and phosphoenolpyruvate: step 7/7. Its function is as follows. Catalyzes the anti-1,4-elimination of the C-3 phosphate and the C-6 proR hydrogen from 5-enolpyruvylshikimate-3-phosphate (EPSP) to yield chorismate, which is the branch point compound that serves as the starting substrate for the three terminal pathways of aromatic amino acid biosynthesis. This reaction introduces a second double bond into the aromatic ring system. This chain is Chorismate synthase, found in Pseudomonas syringae pv. syringae (strain B728a).